Here is a 121-residue protein sequence, read N- to C-terminus: Mediator of RNA polymerase II transcription subunit 22 (121 aa).

This sequence belongs to the Mediator complex subunit 22 family. Component of the Mediator complex.

The protein resides in the nucleus. Component of the Mediator complex, a coactivator involved in the regulated transcription of nearly all RNA polymerase II-dependent genes. Mediator functions as a bridge to convey information from gene-specific regulatory proteins to the basal RNA polymerase II transcription machinery. Mediator is recruited to promoters by direct interactions with regulatory proteins and serves as a scaffold for the assembly of a functional preinitiation complex with RNA polymerase II and the general transcription factors. The sequence is that of Mediator of RNA polymerase II transcription subunit 22 (SRB6) from Eremothecium gossypii (strain ATCC 10895 / CBS 109.51 / FGSC 9923 / NRRL Y-1056) (Yeast).